Consider the following 473-residue polypeptide: H(+)/Cl(-) exchange transporter ClcA (473 aa).

Over 1-32 (MKTDNSTFLAQQIVRLRRRDQIRRLMQRDKTP) the chain is Cytoplasmic. The chain crosses the membrane as a helical span at residues 33-69 (LAILFMAAVVGTLTGLVGVAFEKAVSWVQNMRIGALV). The Periplasmic segment spans residues 70–76 (QVADHAF). The chain crosses the membrane as a helical span at residues 77-100 (LLWPLAFILSALLAMVGYFLVRKF). The Selectivity filter part_1 signature appears at 106-110 (GSGIP). S107 provides a ligand contact to chloride. Residues 109-116 (IPEIEGAL) constitute an intramembrane region (helical). Residues 117–123 (EELRPVR) lie on the Cytoplasmic side of the membrane. 2 consecutive transmembrane segments (helical) span residues 124 to 141 (WWRV…TLGA) and 148 to 166 (EGPT…LDVF). The short motif at 146-150 (GREGP) is the Selectivity filter part_2 element. Residues 167-176 (RMRSAEARHT) are Cytoplasmic-facing. Intramembrane regions (helical) lie at residues 177-189 (LLAT…LSAA) and 193-201 (PLAGILFII). Topologically, residues 202-214 (EEMRPQFRYNLIS) are cytoplasmic. Residues 215–232 (IKAVFTGVIMSSIVFRIF) traverse the membrane as a helical segment. Residues 233–252 (NGEAPIIEVGKLSDAPVNTL) lie on the Periplasmic side of the membrane. A helical transmembrane segment spans residues 253 to 281 (WLYLILGIIFGCVGPVFNSLVLRTQDMFQ). The Cytoplasmic segment spans residues 282 to 287 (RFHGGE). The chain crosses the membrane as a helical span at residues 288-309 (IKKWVLMGGAIGGLCGILGLIE). At 310–329 (PEAAGGGFNLIPIAAAGNFS) the chain is on the periplasmic side. The next 2 helical transmembrane spans lie at 330-349 (VGLL…LCFS) and 355-376 (GIFA…MAAA). The Selectivity filter part_3 motif lies at 355-359 (GIFAP). Residues I356 and F357 each contribute to the chloride site. The Periplasmic portion of the chain corresponds to 377–386 (VLFPQYHLEA). The segment at residues 387–401 (GTFAIAGMGALMAAS) is an intramembrane region (helical). An intramembrane region (note=Loop between two helices) is located at residues 402-404 (VRA). The segment at residues 405 to 416 (PLTGIVLVLEMT) is an intramembrane region (helical). Positions 417 to 421 (DNYQL) form an intramembrane region, note=Loop between two helices. The chain crosses the membrane as a helical span at residues 422–438 (ILPMIITCLGATLLAQF). Over 439–473 (LGGKPLYSTILARTLAKQDAEQAAKNQNAPAGENT) the chain is Cytoplasmic. Y445 provides a ligand contact to chloride.

The protein belongs to the chloride channel (TC 2.A.49) family. ClcA subfamily. As to quaternary structure, homodimer.

Its subcellular location is the cell inner membrane. It carries out the reaction 2 chloride(in) + H(+)(out) = 2 chloride(out) + H(+)(in). Functionally, proton-coupled chloride transporter. Functions as antiport system and exchanges two chloride ions for 1 proton. Probably acts as an electrical shunt for an outwardly-directed proton pump that is linked to amino acid decarboxylation, as part of the extreme acid resistance (XAR) response. The protein is H(+)/Cl(-) exchange transporter ClcA of Salmonella schwarzengrund (strain CVM19633).